We begin with the raw amino-acid sequence, 193 residues long: Auxin-responsive protein IAA23 (193 aa).

Positions methionine 1–proline 12 are enriched in polar residues. The tract at residues methionine 1–proline 66 is disordered. Over residues threonine 21 to serine 36 the composition is skewed to low complexity. Residues leucine 23–leucine 27 carry the EAR-like (transcriptional repression) motif. Over residues aspartate 39–alanine 53 the composition is skewed to basic and acidic residues. One can recognise a PB1 domain in the interval alanine 83 to serine 191.

It belongs to the Aux/IAA family. In terms of assembly, homodimers and heterodimers. As to expression, highly expressed in roots. Expressed in seedlings.

The protein resides in the nucleus. Its function is as follows. Aux/IAA proteins are short-lived transcriptional factors that function as repressors of early auxin response genes at low auxin concentrations. This chain is Auxin-responsive protein IAA23 (IAA23), found in Oryza sativa subsp. japonica (Rice).